A 173-amino-acid chain; its full sequence is Photosystem I assembly protein Ycf3 (173 aa).

TPR repeat units lie at residues 35-68 (AYVY…EDNP), 72-105 (GETL…NSNQ), and 120-153 (GRIA…NPGG).

Belongs to the Ycf3 family.

Its subcellular location is the cellular thylakoid membrane. In terms of biological role, essential for the assembly of the photosystem I (PSI) complex. May act as a chaperone-like factor to guide the assembly of the PSI subunits. This Parasynechococcus marenigrum (strain WH8102) protein is Photosystem I assembly protein Ycf3.